Consider the following 457-residue polypeptide: Adenylosuccinate synthetase (457 aa).

GTP-binding positions include 45–51 (GDEGKGK) and 73–75 (GHT). Asp46 (proton acceptor) is an active-site residue. 2 residues coordinate Mg(2+): Asp46 and Gly73. Residues 46–49 (DEGK), 71–74 (NAGH), Thr163, Arg177, Asn255, Thr270, and Arg334 each bind IMP. The active-site Proton donor is His74. 330-336 (VTTKRVR) serves as a coordination point for substrate. GTP-binding positions include Arg336, 362 to 364 (KLD), and 444 to 446 (GVG).

Belongs to the adenylosuccinate synthetase family. As to quaternary structure, homodimer. Mg(2+) serves as cofactor.

The protein resides in the cytoplasm. The enzyme catalyses IMP + L-aspartate + GTP = N(6)-(1,2-dicarboxyethyl)-AMP + GDP + phosphate + 2 H(+). The protein operates within purine metabolism; AMP biosynthesis via de novo pathway; AMP from IMP: step 1/2. Its function is as follows. Plays an important role in the de novo pathway and in the salvage pathway of purine nucleotide biosynthesis. Catalyzes the first committed step in the biosynthesis of AMP from IMP. This chain is Adenylosuccinate synthetase, found in Aedes aegypti (Yellowfever mosquito).